The chain runs to 365 residues: Serine/threonine-protein kinase SAPK6 (365 aa).

The Protein kinase domain maps to 4–260 (YELLKDIGSG…IREIRNHPWF (257 aa)). ATP-binding positions include 10 to 18 (IGSGNFGVA) and K33. D123 functions as the Proton acceptor in the catalytic mechanism. Residues 298–365 (VQEAKTPPPS…AHASCDLQKS (68 aa)) form a disordered region. Residues 317 to 347 (TEEEEQEDGKNPDDDEGDRDEEEGEEGDSED) are compositionally biased toward acidic residues.

This sequence belongs to the protein kinase superfamily. Ser/Thr protein kinase family. Interacts with BZIP46. In terms of processing, may be phosphorylated. In terms of tissue distribution, expressed in leaf blades and leaf sheaths. Expressed in shoots and roots of young seedlings.

The catalysed reaction is L-seryl-[protein] + ATP = O-phospho-L-seryl-[protein] + ADP + H(+). The enzyme catalyses L-threonyl-[protein] + ATP = O-phospho-L-threonyl-[protein] + ADP + H(+). With respect to regulation, activated by hyperosmotic stress. In terms of biological role, may play a role in signal transduction of hyperosmotic response. Can phosphorylate ABI5 in vitro. Can phosphorylate BZIP46 in vitro. This Oryza sativa subsp. japonica (Rice) protein is Serine/threonine-protein kinase SAPK6.